The sequence spans 537 residues: Synaptotagmin-C (537 aa).

Residues 1 to 52 are Vesicular-facing; sequence MSGDGEDELCRNALALVNELCFSVRGNHNNEKCIEFSYLLRDRDRTRHIETD. A helical transmembrane segment spans residues 53–78; the sequence is ISVSLLSVIVTFCGIVLLGVSLFVSW. Topologically, residues 79 to 537 are cytoplasmic; the sequence is KLCWIPWRDK…TIVVESPHSV (459 aa). 2 disordered regions span residues 92-111 and 142-200; these read PQRR…HHSH and IKLS…EFGT. The segment covering 100–110 has biased composition (basic residues); it reads HPHQHLHHHHS. Positions 143 to 174 are enriched in polar residues; that stretch reads KLSQTSPDIPVDTSSGSKENNIPNAHSQQQVS. The interval 228-477 is phospholipid binding; it reads EAKKHQKVNC…VIGMCRVGNA (250 aa). 2 C2 domains span residues 236–357 and 368–501; these read NCGR…TIWR and DLGE…EQWH. Positions 267, 273, 325, 326, 327, 330, 333, 399, 405, 459, and 461 each coordinate Ca(2+).

This sequence belongs to the synaptotagmin family. Homodimer or homotrimer (possible). Requires Ca(2+) as cofactor.

The protein localises to the cytoplasmic vesicle. It is found in the secretory vesicle. Its subcellular location is the synaptic vesicle membrane. The protein resides in the synapse. In terms of biological role, may have a regulatory role in the membrane interactions during trafficking of synaptic vesicles at the active zone of the synapse. It binds acidic phospholipids with a specificity that requires the presence of both an acidic head group and a diacyl backbone. The polypeptide is Synaptotagmin-C (P65-C) (Diplobatis ommata (Ocellated electric ray)).